A 384-amino-acid polypeptide reads, in one-letter code: 8-amino-7-oxononanoate synthase (384 aa).

Residue Arg21 participates in substrate binding. Gly108–Phe109 contributes to the pyridoxal 5'-phosphate binding site. A substrate-binding site is contributed by His133. 3 residues coordinate pyridoxal 5'-phosphate: Ser179, His207, and Thr233. Lys236 is subject to N6-(pyridoxal phosphate)lysine. Thr352 contacts substrate.

This sequence belongs to the class-II pyridoxal-phosphate-dependent aminotransferase family. BioF subfamily. Homodimer. The cofactor is pyridoxal 5'-phosphate.

It carries out the reaction 6-carboxyhexanoyl-[ACP] + L-alanine + H(+) = (8S)-8-amino-7-oxononanoate + holo-[ACP] + CO2. It functions in the pathway cofactor biosynthesis; biotin biosynthesis. In terms of biological role, catalyzes the decarboxylative condensation of pimeloyl-[acyl-carrier protein] and L-alanine to produce 8-amino-7-oxononanoate (AON), [acyl-carrier protein], and carbon dioxide. The sequence is that of 8-amino-7-oxononanoate synthase from Escherichia coli O157:H7.